The following is a 24-amino-acid chain: Xenoposin-precursor fragment B1 (24 aa).

As to expression, expressed by the skin glands.

Its subcellular location is the secreted. Functionally, has antibacterial activity. This is Xenoposin-precursor fragment B1 from Xenopus borealis (Kenyan clawed frog).